Here is a 173-residue protein sequence, read N- to C-terminus: ATP-dependent protease subunit HslV (173 aa).

The active site involves Thr-2. Na(+) is bound by residues Gly-158, Asp-161, and Ser-164.

This sequence belongs to the peptidase T1B family. HslV subfamily. As to quaternary structure, a double ring-shaped homohexamer of HslV is capped on each side by a ring-shaped HslU homohexamer. The assembly of the HslU/HslV complex is dependent on binding of ATP.

Its subcellular location is the cytoplasm. It catalyses the reaction ATP-dependent cleavage of peptide bonds with broad specificity.. Its activity is regulated as follows. Allosterically activated by HslU binding. In terms of biological role, protease subunit of a proteasome-like degradation complex believed to be a general protein degrading machinery. The sequence is that of ATP-dependent protease subunit HslV from Haemophilus ducreyi (strain 35000HP / ATCC 700724).